The following is a 132-amino-acid chain: Small ribosomal subunit protein uS8 (132 aa).

This sequence belongs to the universal ribosomal protein uS8 family. In terms of assembly, part of the 30S ribosomal subunit. Contacts proteins S5 and S12.

One of the primary rRNA binding proteins, it binds directly to 16S rRNA central domain where it helps coordinate assembly of the platform of the 30S subunit. The sequence is that of Small ribosomal subunit protein uS8 from Lactococcus lactis subsp. lactis (strain IL1403) (Streptococcus lactis).